We begin with the raw amino-acid sequence, 178 residues long: Mediator of RNA polymerase II transcription subunit 30 (178 aa).

The tract at residues 1-22 (MSTPPLAASGMAPGPFAGPQAQ) is disordered. S2 is modified (N-acetylserine). Low complexity predominate over residues 10–22 (GMAPGPFAGPQAQ). Coiled-coil stretches lie at residues 70 to 94 (TYQDRLTKLQDNLRQLSVLFRKLRL) and 133 to 173 (RFAS…INAM).

It belongs to the Mediator complex subunit 30 family. As to quaternary structure, component of the Mediator complex, which is composed of MED1, MED4, MED6, MED7, MED8, MED9, MED10, MED11, MED12, MED13, MED13L, MED14, MED15, MED16, MED17, MED18, MED19, MED20, MED21, MED22, MED23, MED24, MED25, MED26, MED27, MED29, MED30, MED31, CCNC, CDK8 and CDC2L6/CDK11. The MED12, MED13, CCNC and CDK8 subunits form a distinct module termed the CDK8 module. Mediator containing the CDK8 module is less active than Mediator lacking this module in supporting transcriptional activation. Individual preparations of the Mediator complex lacking one or more distinct subunits have been variously termed ARC, CRSP, DRIP, PC2, SMCC and TRAP. Expressed in brain, heart, kidney, liver, lung, pancreas, placenta and skeletal muscle.

It localises to the nucleus. Its function is as follows. Component of the Mediator complex, a coactivator involved in the regulated transcription of nearly all RNA polymerase II-dependent genes. Mediator functions as a bridge to convey information from gene-specific regulatory proteins to the basal RNA polymerase II transcription machinery. Mediator is recruited to promoters by direct interactions with regulatory proteins and serves as a scaffold for the assembly of a functional preinitiation complex with RNA polymerase II and the general transcription factors. The protein is Mediator of RNA polymerase II transcription subunit 30 (MED30) of Homo sapiens (Human).